We begin with the raw amino-acid sequence, 396 residues long: Lipid-A-disaccharide synthase (396 aa).

It belongs to the LpxB family.

It catalyses the reaction a lipid X + a UDP-2-N,3-O-bis[(3R)-3-hydroxyacyl]-alpha-D-glucosamine = a lipid A disaccharide + UDP + H(+). It participates in bacterial outer membrane biogenesis; LPS lipid A biosynthesis. Functionally, condensation of UDP-2,3-diacylglucosamine and 2,3-diacylglucosamine-1-phosphate to form lipid A disaccharide, a precursor of lipid A, a phosphorylated glycolipid that anchors the lipopolysaccharide to the outer membrane of the cell. This Hahella chejuensis (strain KCTC 2396) protein is Lipid-A-disaccharide synthase.